The sequence spans 287 residues: Glutamate racemase (287 aa).

A compositionally biased stretch (polar residues) spans M1–A15. The tract at residues M1 to R25 is disordered. Substrate-binding positions include D32 to S33 and Y64 to G65. The Proton donor/acceptor role is filled by C96. N97–T98 is a binding site for substrate. C208 (proton donor/acceptor) is an active-site residue. T209–H210 provides a ligand contact to substrate.

This sequence belongs to the aspartate/glutamate racemases family.

It catalyses the reaction L-glutamate = D-glutamate. The protein operates within cell wall biogenesis; peptidoglycan biosynthesis. Provides the (R)-glutamate required for cell wall biosynthesis. The protein is Glutamate racemase of Yersinia pseudotuberculosis serotype O:3 (strain YPIII).